We begin with the raw amino-acid sequence, 156 residues long: Cyanate hydratase (156 aa).

Active-site residues include arginine 96, glutamate 99, and serine 122.

It belongs to the cyanase family.

It catalyses the reaction cyanate + hydrogencarbonate + 3 H(+) = NH4(+) + 2 CO2. Its function is as follows. Catalyzes the reaction of cyanate with bicarbonate to produce ammonia and carbon dioxide. The sequence is that of Cyanate hydratase from Escherichia coli O9:H4 (strain HS).